The sequence spans 318 residues: Methionyl-tRNA formyltransferase (318 aa).

112–115 (SILP) contributes to the (6S)-5,6,7,8-tetrahydrofolate binding site.

It belongs to the Fmt family.

The catalysed reaction is L-methionyl-tRNA(fMet) + (6R)-10-formyltetrahydrofolate = N-formyl-L-methionyl-tRNA(fMet) + (6S)-5,6,7,8-tetrahydrofolate + H(+). Attaches a formyl group to the free amino group of methionyl-tRNA(fMet). The formyl group appears to play a dual role in the initiator identity of N-formylmethionyl-tRNA by promoting its recognition by IF2 and preventing the misappropriation of this tRNA by the elongation apparatus. The chain is Methionyl-tRNA formyltransferase from Shewanella sp. (strain ANA-3).